The chain runs to 120 residues: uncharacterized protein (120 aa).

A signal peptide spans 1-27 (MPKIGVSLIVLIMLIIFLAGCNKNEQN).

This is an uncharacterized protein from Bacillus subtilis (strain 168).